The following is a 620-amino-acid chain: Protein NRT1/ PTR FAMILY 2.13 (620 aa).

A disordered region spans residues 1-32 (MVLEDRKDGSSLPGRSGSFSKSSPSELDVVDP). Positions 10-25 (SSLPGRSGSFSKSSPS) are enriched in low complexity. 12 consecutive transmembrane segments (helical) span residues 70 to 90 (LGSI…FHLE), 95 to 115 (ANVI…GAYI), 126 to 146 (IAFA…TASF), 167 to 187 (KLQI…SGGI), 213 to 233 (FFNW…TVVV), 241 to 261 (WIIG…MFFA), 364 to 384 (IVPI…QGTF), 402 to 422 (IPAG…LPFY), 443 to 463 (LQRI…AGIV), 485 to 505 (VFWL…NIIG), 524 to 544 (SLFS…VTVV), and 568 to 588 (YFYY…WYCA).

Belongs to the major facilitator superfamily. Proton-dependent oligopeptide transporter (POT/PTR) (TC 2.A.17) family. Interacts with NLA. Ubiquitinated by NLA. Ubiquitination of NPF2.13 leads to its degradation by the proteasome. In terms of tissue distribution, expressed in leaves and flowers. Detected in stems and siliques. Highest expression in the distal lamina of older leaves. Restricted to the sieve element and companion cell complex of the minor vein.

Its subcellular location is the cell membrane. Low-affinity proton-dependent nitrate transporter. Not involved in dipeptides transport, but has a weak glucosinolate transport activity. Involved in phloem loading and nitrate remobilization from the older leaves to other tissues. The protein is Protein NRT1/ PTR FAMILY 2.13 (NPF2.13) of Arabidopsis thaliana (Mouse-ear cress).